The chain runs to 150 residues: Catabolic 3-dehydroquinase 2 (150 aa).

Tyrosine 23 acts as the Proton acceptor in catalysis. 3 residues coordinate substrate: asparagine 74, histidine 80, and aspartate 87. Histidine 100 serves as the catalytic Proton donor. Substrate-binding positions include 101–102 (IT) and arginine 111.

This sequence belongs to the type-II 3-dehydroquinase family. In terms of assembly, homododecamer. Adopts a ring-like structure, composed of an arrangement of two hexameric rings stacked on top of one another.

The enzyme catalyses 3-dehydroquinate = 3-dehydroshikimate + H2O. The protein operates within aromatic compound metabolism; 3,4-dihydroxybenzoate biosynthesis; 3,4-dihydroxybenzoate from 3-dehydroquinate: step 1/2. Is involved in the catabolism of quinate. Allows the utilization of quinate as carbon source via the beta-ketoadipate pathway. This Aspergillus fumigatus (strain ATCC MYA-4609 / CBS 101355 / FGSC A1100 / Af293) (Neosartorya fumigata) protein is Catabolic 3-dehydroquinase 2.